Reading from the N-terminus, the 396-residue chain is S-arrestin (396 aa).

Over residues 375–386 the composition is skewed to basic and acidic residues; that stretch reads ARDPLKGELQAE. Residues 375–396 form a disordered region; it reads ARDPLKGELQAEEKEEEEDDEK. Over residues 387–396 the composition is skewed to acidic residues; that stretch reads EKEEEEDDEK.

It belongs to the arrestin family. Interacts with RHO (via the phosphorylated C-terminus).

The protein resides in the cell projection. Its subcellular location is the cilium. It is found in the photoreceptor outer segment. It localises to the membrane. Its function is as follows. Binds to photoactivated, phosphorylated RHO and terminates RHO signaling via G-proteins by competing with G-proteins for the same binding site on RHO. May play a role in preventing light-dependent degeneration of retinal photoreceptor cells. The chain is S-arrestin (sag) from Xenopus laevis (African clawed frog).